Consider the following 275-residue polypeptide: Thiazole synthase (275 aa).

Lys-108 acts as the Schiff-base intermediate with DXP in catalysis. 1-deoxy-D-xylulose 5-phosphate-binding positions include Gly-169, 196–197 (AG), and 218–219 (NT).

The protein belongs to the ThiG family. Homotetramer. Forms heterodimers with either ThiH or ThiS.

The protein localises to the cytoplasm. It carries out the reaction [ThiS sulfur-carrier protein]-C-terminal-Gly-aminoethanethioate + 2-iminoacetate + 1-deoxy-D-xylulose 5-phosphate = [ThiS sulfur-carrier protein]-C-terminal Gly-Gly + 2-[(2R,5Z)-2-carboxy-4-methylthiazol-5(2H)-ylidene]ethyl phosphate + 2 H2O + H(+). It functions in the pathway cofactor biosynthesis; thiamine diphosphate biosynthesis. Its function is as follows. Catalyzes the rearrangement of 1-deoxy-D-xylulose 5-phosphate (DXP) to produce the thiazole phosphate moiety of thiamine. Sulfur is provided by the thiocarboxylate moiety of the carrier protein ThiS. In vitro, sulfur can be provided by H(2)S. In Ralstonia nicotianae (strain ATCC BAA-1114 / GMI1000) (Ralstonia solanacearum), this protein is Thiazole synthase.